Consider the following 297-residue polypeptide: F-box only protein 2 (297 aa).

A disordered region spans residues 1 to 42 (MDGDGDPESVGQPEEASPEEQQEEACAEEANGGEERPEDDGE). Acidic residues predominate over residues 16 to 27 (ASPEEQQEEACA). Residues 45–92 (AAYLDELPEPLLLRVLAELPAAQLVQACRLVCLRWKELVDGAPLWLLK) form the F-box domain. An FBA domain is found at 114–297 (FYFLSKRRRN…VTNSSVWVEP (184 aa)). A carbohydrate is bound by residues 211–213 (RRD) and 279–280 (YW).

In terms of assembly, component of the SCF(FBXO2) complex consisting of CUL1, RBX1, SKP1 and FBXO2. Predominantly detected as heterodimer with SKP1; the heterodimer with SKP1 is not part of the SCF(FBXO2) complex.

It localises to the cytoplasm. It is found in the microsome membrane. It participates in protein modification; protein ubiquitination. Substrate recognition component of a SCF (SKP1-CUL1-F-box protein) E3 ubiquitin-protein ligase complex that mediates the ubiquitination and subsequent proteasomal degradation of target proteins. Involved in the endoplasmic reticulum-associated degradation pathway (ERAD) for misfolded lumenal proteins by recognizing and binding sugar chains on unfolded glycoproteins that are retrotranslocated into the cytosol and promoting their ubiquitination and subsequent degradation. Prevents formation of cytosolic aggregates of unfolded glycoproteins that have been retrotranslocated into the cytosol. Able to recognize and bind denatured glycoproteins, preferentially those of the high-mannose type. The protein is F-box only protein 2 (FBXO2) of Bos taurus (Bovine).